The chain runs to 85 residues: Cell division topological specificity factor (85 aa).

This sequence belongs to the MinE family.

Functionally, prevents the cell division inhibition by proteins MinC and MinD at internal division sites while permitting inhibition at polar sites. This ensures cell division at the proper site by restricting the formation of a division septum at the midpoint of the long axis of the cell. In Thioalkalivibrio sulfidiphilus (strain HL-EbGR7), this protein is Cell division topological specificity factor.